Here is a 566-residue protein sequence, read N- to C-terminus: Poly(A) polymerase pla1 (566 aa).

ATP-binding positions include 86–88 (YGS), 99–101 (DID), Asp-153, Lys-214, Tyr-223, and 232–233 (GV). Mg(2+)-binding residues include Asp-99, Asp-101, and Asp-153. 2 disordered regions span residues 437–463 (HEKLANDTVNEEKADNTESKADGSENG) and 530–566 (DEVFEPGEERPKATKKRSTADTAHSTEQLKRQKVSTA).

Belongs to the poly(A) polymerase family. Requires Mg(2+) as cofactor. Mn(2+) is required as a cofactor.

The protein resides in the nucleus. The enzyme catalyses RNA(n) + ATP = RNA(n)-3'-adenine ribonucleotide + diphosphate. Functionally, polymerase that creates the 3'-poly(A) tail of mRNA's. May acquire specificity through interaction with a cleavage and polyadenylation factor (CF I). This is Poly(A) polymerase pla1 (pla1) from Schizosaccharomyces pombe (strain 972 / ATCC 24843) (Fission yeast).